We begin with the raw amino-acid sequence, 375 residues long: Succinyl-diaminopimelate desuccinylase (375 aa).

Residue His-66 participates in Zn(2+) binding. Asp-68 is a catalytic residue. A Zn(2+)-binding site is contributed by Asp-99. Glu-133 (proton acceptor) is an active-site residue. Zn(2+) contacts are provided by Glu-134, Glu-162, and His-348.

This sequence belongs to the peptidase M20A family. DapE subfamily. Homodimer. Zn(2+) serves as cofactor. Requires Co(2+) as cofactor.

It catalyses the reaction N-succinyl-(2S,6S)-2,6-diaminopimelate + H2O = (2S,6S)-2,6-diaminopimelate + succinate. The protein operates within amino-acid biosynthesis; L-lysine biosynthesis via DAP pathway; LL-2,6-diaminopimelate from (S)-tetrahydrodipicolinate (succinylase route): step 3/3. Functionally, catalyzes the hydrolysis of N-succinyl-L,L-diaminopimelic acid (SDAP), forming succinate and LL-2,6-diaminopimelate (DAP), an intermediate involved in the bacterial biosynthesis of lysine and meso-diaminopimelic acid, an essential component of bacterial cell walls. The sequence is that of Succinyl-diaminopimelate desuccinylase from Aeromonas hydrophila subsp. hydrophila (strain ATCC 7966 / DSM 30187 / BCRC 13018 / CCUG 14551 / JCM 1027 / KCTC 2358 / NCIMB 9240 / NCTC 8049).